We begin with the raw amino-acid sequence, 151 residues long: Neuroglobin (151 aa).

One can recognise a Globin domain in the interval 1 to 149 (MERPEPELIR…VVQAMSRGWD (149 aa)). Heme b is bound by residues His-64 and His-96.

This sequence belongs to the globin family. In terms of assembly, monomer. Homodimer and homotetramer; disulfide-linked. Mainly monomeric but also detected as part of homodimers and homotetramers. Interacts with 14-3-3 proteins; regulates the phosphorylation of NGB. Could interact (ferrous form) with G-alpha(i) proteins (GTP-bound form). In terms of processing, phosphorylated during hypoxia by ERK1/ERK2. Phosphorylation regulates the heme pocket hexacoordination preventing the association of His-64 with the heme metal center. Thereby, promotes the access of dioxygen and nitrite to the heme and stimulates the nitrite reductase activity. Phosphorylation during hypoxia is stabilized by 14-3-3 proteins.

It is found in the cytoplasm. Its subcellular location is the cytosol. The protein localises to the mitochondrion matrix. It catalyses the reaction Fe(III)-heme b-[protein] + nitric oxide + H2O = Fe(II)-heme b-[protein] + nitrite + 2 H(+). In terms of biological role, monomeric globin with a bis-histidyl six-coordinate heme-iron atom through which it can bind dioxygen, carbon monoxide and nitric oxide. Could help transport oxygen and increase its availability to the metabolically active neuronal tissues, though its low quantity in tissues as well as its high affinity for dioxygen, which may limit its oxygen-releasing ability, argue against it. The ferrous/deoxygenated form exhibits a nitrite reductase activity and it could produce nitric oxide which in turn inhibits cellular respiration in response to hypoxia. In its ferrous/deoxygenated state, it may also exhibit GDI (Guanine nucleotide Dissociation Inhibitor) activity toward heterotrimeric G-alpha proteins, thereby regulating signal transduction to facilitate neuroprotective responses in the wake of hypoxia and associated oxidative stress. This chain is Neuroglobin, found in Canis lupus familiaris (Dog).